The primary structure comprises 506 residues: MALGTLFLALAAGLSTASPPNILLIFADDLGYGDLGSYGHPSSTTPNLDQLAEGGLRFTDFYVPVSLCTPSRAALLTGRLPVRSGMYPGVLGPSSQGGLPLEEVTLAEVLAARGYLTGMAGKWHLGVGPEGAFLPPHQGFHRFLGIPYSHDQGPCQNLTCFPPDIPCKGGCDQGLVPIPLLANLTVEAQPPWLPGLEARYVSFSRDLMADAQRQGRPFFLYYASHHTHYPQFSGQSFTKRSGRGPFGDSLMELDGAVGALMTTVGDLGLLEETLVIFTADNGPELMRMSNGGCSGLLRCGKGTTFEGGVREPALVYWPGHITPGVTHELASSLDLLPTLAALTGAPLPNVTLDGVDISPLLLGTGKSPRKSVFFYPPYPDEIHGVFAVRNGKYKAHFFTQGSAHSDTTSDPACHAANRLTAHEPPLLYDLSQDPGENYNVLESIEGVSPEALQALKHIQLLKAQYDAAMTFGPSQIAKGEDPALQICCQPSCTPHPVCCHCPGSQS.

The N-terminal stretch at 1-17 (MALGTLFLALAAGLSTA) is a signal peptide. Ca(2+)-binding residues include D28, D29, and C68. The active-site Nucleophile is the C68. The residue at position 68 (C68) is a 3-oxoalanine (Cys). Residue K122 participates in substrate binding. H124 is a catalytic residue. S149 is a binding site for substrate. 2 cysteine pairs are disulfide-bonded: C155–C171 and C160–C167. N157 is a glycosylation site (N-linked (GlcNAc...) asparagine). N-linked (GlcNAc...) asparagine glycosylation occurs at N183. Substrate is bound at residue H228. Residues D280 and N281 each coordinate Ca(2+). 4 cysteine pairs are disulfide-bonded: C299/C413, C487/C499, C488/C501, and C492/C498. K301 serves as a coordination point for substrate. N349 is a glycosylation site (N-linked (GlcNAc...) asparagine).

It belongs to the sulfatase family. Homodimer at neutral pH and homooctamer at acidic pH. Exists both as a single chain of 58 kDa (component A) or as a chain of 50 kDa (component B) linked by disulfide bond(s) to a 7 kDa chain (component C). Interacts with SUMF1. Ca(2+) serves as cofactor. The conversion to 3-oxoalanine (also known as C-formylglycine, FGly), of a serine or cysteine residue in prokaryotes and of a cysteine residue in eukaryotes, is critical for catalytic activity. This post-translational modification is severely defective in multiple sulfatase deficiency (MSD).

The protein resides in the endoplasmic reticulum. The protein localises to the lysosome. The enzyme catalyses an N-acyl-1-beta-D-(3-O-sulfo)-galactosyl-sphing-4-enine + H2O = a beta-D-galactosyl-(1&lt;-&gt;1')-N-acylsphing-4-enine + sulfate + H(+). Functionally, hydrolyzes cerebroside sulfate. In Mus musculus (Mouse), this protein is Arylsulfatase A (Arsa).